Reading from the N-terminus, the 185-residue chain is Large ribosomal subunit protein uL5 (185 aa).

It belongs to the universal ribosomal protein uL5 family. In terms of assembly, part of the 50S ribosomal subunit; part of the 5S rRNA/L5/L18/L25 subcomplex. Contacts the 5S rRNA and the P site tRNA. Forms a bridge to the 30S subunit in the 70S ribosome.

Functionally, this is one of the proteins that bind and probably mediate the attachment of the 5S RNA into the large ribosomal subunit, where it forms part of the central protuberance. In the 70S ribosome it contacts protein S13 of the 30S subunit (bridge B1b), connecting the 2 subunits; this bridge is implicated in subunit movement. Contacts the P site tRNA; the 5S rRNA and some of its associated proteins might help stabilize positioning of ribosome-bound tRNAs. The protein is Large ribosomal subunit protein uL5 of Bartonella bacilliformis (strain ATCC 35685 / KC583 / Herrer 020/F12,63).